A 182-amino-acid chain; its full sequence is CDP-diacylglycerol--glycerol-3-phosphate 3-phosphatidyltransferase (182 aa).

Topologically, residues 1–12 (MQLNIPTWLTLF) are cytoplasmic. A helical membrane pass occupies residues 13–37 (RVVLIPFFVLAFYLPFVWAPMVCAI). Residues 38 to 60 (IFVFAAATDWFDGFLARRWKQTT) are Periplasmic-facing. Residues 61 to 81 (RFGAFLDPVADKVMVAIALVL) form a helical membrane-spanning segment. The Cytoplasmic portion of the chain corresponds to 82 to 86 (VAEHY). The helical transmembrane segment at 87 to 107 (HVWWITLPAATMIAREIIISS) threads the bilayer. At 108–145 (LREWMAEIGKRSSVAVSWIGKVKTTAQMGSLVGLLWRP) the chain is on the periplasmic side. The chain crosses the membrane as a helical span at residues 146-168 (DHNIELASFVLLYIAAVLTFWSM). Over 169–181 (FQYLNAAWKDLLE) the chain is Cytoplasmic.

The protein belongs to the CDP-alcohol phosphatidyltransferase class-I family.

The protein localises to the cell inner membrane. The catalysed reaction is a CDP-1,2-diacyl-sn-glycerol + sn-glycerol 3-phosphate = a 1,2-diacyl-sn-glycero-3-phospho-(1'-sn-glycero-3'-phosphate) + CMP + H(+). The protein operates within phospholipid metabolism; phosphatidylglycerol biosynthesis; phosphatidylglycerol from CDP-diacylglycerol: step 1/2. In terms of biological role, catalyzes the conversion of cytidine diphosphate diacylglycerol (CDP-DG) and glycerol 3-phosphate into phosphatidylglycerol. Essential for the synthesis of anionic phospholipids, thereby playing a role in balancing the ratio of zwitterionic and anionic phospholipids, which is thought to be important for normal membrane function. This is CDP-diacylglycerol--glycerol-3-phosphate 3-phosphatidyltransferase from Yersinia enterocolitica serotype O:8 / biotype 1B (strain NCTC 13174 / 8081).